Consider the following 556-residue polypeptide: PPE family protein PPE2 (556 aa).

The interval alanine 8 to alanine 164 is PPE. The SH3-like stretch occupies residues glutamine 201–leucine 256. The leucine zipper motif stretch occupies residues leucine 319 to leucine 340. Disordered regions lie at residues threonine 385–threonine 418 and glycine 443–glutamate 556. Residues proline 400–valine 417 are compositionally biased toward pro residues. The span at alanine 456–proline 471 shows a compositional bias: low complexity. A compositionally biased stretch (basic residues) spans glutamine 472–glutamine 481. The Nuclear localization signal signature appears at arginine 473–glutamine 481.

It belongs to the mycobacterial PPE family.

It localises to the secreted. The protein resides in the host cytoplasm. The protein localises to the host nucleus. Inhibits nitric oxide (NO) production in activated macrophages. Acts by inhibiting expression of the host inducible nitric oxide synthase (iNOS). PPE2 is translocated into the host macrophage nucleus, where it interacts with a GATA-binding site overlapping with the TATA box of NOS2 (iNOS) promoter, and strongly inhibits NOS2 gene transcription. Reduction in NO production in turn facilitates intracellular survival of the bacilli inside the macrophage. In addition, disrupts the assembly of NADPH oxidase complex, which inhibits NADPH oxidase-mediated reactive oxygen species (ROS) generation in macrophages and favors M.tuberculosis survival. Acts by interacting with NCF2, the cytosolic subunit of NADPH oxidase, and preventing translocation of NCF2 and NCF1 to the membrane, which causes a reduction of the functional assembly of NADPH oxidase complex and a decrease in NADPH oxidase activity. The protein is PPE family protein PPE2 (PPE2) of Mycobacterium tuberculosis (strain ATCC 25618 / H37Rv).